Consider the following 90-residue polypeptide: DNA-directed RNA polymerase subunit omega (90 aa).

The segment at 69-90 (RQEQQEQDAAELAAVSSITHNR) is disordered.

The protein belongs to the RNA polymerase subunit omega family. In terms of assembly, the RNAP catalytic core consists of 2 alpha, 1 beta, 1 beta' and 1 omega subunit. When a sigma factor is associated with the core the holoenzyme is formed, which can initiate transcription.

The catalysed reaction is RNA(n) + a ribonucleoside 5'-triphosphate = RNA(n+1) + diphosphate. In terms of biological role, promotes RNA polymerase assembly. Latches the N- and C-terminal regions of the beta' subunit thereby facilitating its interaction with the beta and alpha subunits. In Aliivibrio fischeri (strain ATCC 700601 / ES114) (Vibrio fischeri), this protein is DNA-directed RNA polymerase subunit omega.